The following is a 268-amino-acid chain: Chymotrypsin-C (268 aa).

The first 16 residues, 1-16 (MLGITVFTTFLAYASS), serve as a signal peptide directing secretion. Residues 17–29 (CGAPIFQPNLSAR) constitute a propeptide, activation peptide. Disulfide bonds link C17-C141, C59-C75, C155-C222, C186-C202, and C212-C243. A glycan (N-linked (GlcNAc...) asparagine) is linked at N25. The region spanning 30 to 268 (VVGGEDAIPH…IDWINQKLQL (239 aa)) is the Peptidase S1 domain. Residues H74 and D121 each act as charge relay system in the active site. Catalysis depends on S216, which acts as the Charge relay system.

The protein belongs to the peptidase S1 family. Elastase subfamily. In terms of assembly, monomer. The zymogen is secreted as a ternary complex composed of procarboxypeptidase A, chymotrypsinogen C and proproteinase E. In terms of tissue distribution, pancreas.

The protein resides in the secreted. It localises to the extracellular space. It carries out the reaction Preferential cleavage: Leu-|-Xaa, Tyr-|-Xaa, Phe-|-Xaa, Met-|-Xaa, Trp-|-Xaa, Gln-|-Xaa, Asn-|-Xaa.. Functionally, regulates activation and degradation of trypsinogens and procarboxypeptidases by targeting specific cleavage sites within their zymogen precursors. Has chymotrypsin-type protease activity and hypocalcemic activity. The protein is Chymotrypsin-C (CTRC) of Bos taurus (Bovine).